Reading from the N-terminus, the 95-residue chain is U8-barytoxin-Tl1a (95 aa).

A signal peptide spans 1 to 21 (MKTLVLVAVLGLASLYLLSYA). A propeptide spanning residues 22 to 50 (SEVQQLSVAEEEFGALIDAFGGLLETEER) is cleaved from the precursor. 3 disulfide bridges follow: Cys57-Cys71, Cys64-Cys76, and Cys70-Cys86.

It belongs to the neurotoxin 10 (Hwtx-1) family. 26 (ICK-1) subfamily. Expressed by the venom gland.

It is found in the secreted. Functionally, ion channel inhibitor. This chain is U8-barytoxin-Tl1a, found in Trittame loki (Brush-footed trapdoor spider).